The primary structure comprises 211 residues: Phosphoserine phosphatase (211 aa).

D11 serves as the catalytic Nucleophile. Mg(2+) contacts are provided by D11 and D13. The Proton donor role is filled by D13. Substrate is bound by residues E20, R56, 99 to 100 (SG), and K144. D167 contacts Mg(2+). N170 is a substrate binding site.

It belongs to the HAD-like hydrolase superfamily. SerB family. It depends on Mg(2+) as a cofactor.

The enzyme catalyses O-phospho-L-serine + H2O = L-serine + phosphate. It carries out the reaction O-phospho-D-serine + H2O = D-serine + phosphate. The protein operates within amino-acid biosynthesis; L-serine biosynthesis; L-serine from 3-phospho-D-glycerate: step 3/3. The protein is Phosphoserine phosphatase of Methanocaldococcus jannaschii (strain ATCC 43067 / DSM 2661 / JAL-1 / JCM 10045 / NBRC 100440) (Methanococcus jannaschii).